The following is a 442-amino-acid chain: GTPase HflX (442 aa).

One can recognise a Hflx-type G domain in the interval 186-362 (VLVALAGYTN…ALNRVVLKLP (177 aa)). GTP contacts are provided by residues 192–199 (GYTNAGKS), 217–221 (FTTLD), 238–241 (DTVG), 306–309 (NKID), and 341–343 (SAR). Residues S199 and T219 each contribute to the Mg(2+) site.

This sequence belongs to the TRAFAC class OBG-HflX-like GTPase superfamily. HflX GTPase family. As to quaternary structure, monomer. Associates with the 50S ribosomal subunit. Mg(2+) is required as a cofactor.

It is found in the cytoplasm. In terms of biological role, GTPase that associates with the 50S ribosomal subunit and may have a role during protein synthesis or ribosome biogenesis. The chain is GTPase HflX from Thermococcus kodakarensis (strain ATCC BAA-918 / JCM 12380 / KOD1) (Pyrococcus kodakaraensis (strain KOD1)).